The sequence spans 476 residues: Efflux pump atB (476 aa).

The tract at residues 1–38 is disordered; it reads MAPQLAGSSHSSSASDQAHRQSSDPALESGSDTHVGSI. 10 helical membrane passes run 69–89, 96–116, 127–147, 186–206, 264–284, 294–314, 347–367, 372–392, 403–425, and 440–460; these read LIVAIVSSTRLGLSPMILAPL, KPVYVVSMFFFVVWIIPCAVA, FFNGFAGAAFLSVAGGTVGDL, WSFYILLIWAFAQWVSISLLV, LLLCLFCSVLLGVLYLFFGAF, FNLWQVGLSFLGITVGMIIGI, LPPAVGGAPLVTIGLLWFAWT, VHWIVPIIGSGIFGAGVIMIF, YPLYAASALAANSFSRSMFAAAF, and WAGFLLAMITLLLAPFPYIFY.

This sequence belongs to the major facilitator superfamily.

It is found in the cell membrane. Efflux pump that might be required for efficient secretion of terreic acid. This Aspergillus terreus (strain NIH 2624 / FGSC A1156) protein is Efflux pump atB.